The chain runs to 299 residues: Kynurenine formamidase-like hydrolase fscH (299 aa).

Residues 48–52 (HGGAW) carry the HGGXW motif. Residues 90–110 (SPRTPSQPVPSGGHVGGEQQA) form a disordered region. The active-site Nucleophile is serine 142.

Belongs to the kynurenine formamidase family.

The protein operates within secondary metabolite biosynthesis. Its function is as follows. Kynurenine formamidase-like hydrolase; part of the fragmented gene cluster that mediates the biosynthesis of fusarochromene, a tryptophan-derived metabolite closely related to a group of mycotoxins including fusarochromanone. Within the pathway, fscH converts the product of fscD into 4-hydroxykyrunenine. The first step of the pathway is the epimerization of L-tryptophan to D-tryptophan in the presence of the NRPS-like tryptophan epimerase fscC. D-tryptophan is subsequently hydroxylated by the tryptophan 6-hydroxylase fscE to yield 6-hydroxytryptophan. The pyrrole ring undergoes cleavaged by the tryptophan 2,3-dioxygenase fscD and is finally converted to 4-hydroxykyrunenine by the hydrolase fscH. The NRPS-like oxidoreductase fscA reduces the carboxyl group to primary alcohol and the DMATS-type prenyltransferase fscG performs prenylation, followed by the formation of a chromene ring catalyzed by the oxidoreductase fscI, which leads to desacetylfusarochromene. Epoxidation by fscF and rearrangement reactions of chromene double bonds convert compound desacetylfusarochromene to fusarochromanones. Although specific acetyltransferases were not found near the fsc gene cluster, several predicted enzymes containing the N-acetyltransferase superfamily domain are present in the genome of F.equiseti. These predicted enzymes may have the potential to convert desacetylfusarochromene to fusarochromene. The sequence is that of Kynurenine formamidase-like hydrolase fscH from Fusarium equiseti (Fusarium scirpi).